A 235-amino-acid chain; its full sequence is Large ribosomal subunit protein uL1 (235 aa).

It belongs to the universal ribosomal protein uL1 family. In terms of assembly, part of the 50S ribosomal subunit.

Functionally, binds directly to 23S rRNA. The L1 stalk is quite mobile in the ribosome, and is involved in E site tRNA release. Protein L1 is also a translational repressor protein, it controls the translation of the L11 operon by binding to its mRNA. The polypeptide is Large ribosomal subunit protein uL1 (Mycolicibacterium paratuberculosis (strain ATCC BAA-968 / K-10) (Mycobacterium paratuberculosis)).